The following is a 136-amino-acid chain: Holo-[acyl-carrier-protein] synthase (136 aa).

Mg(2+) contacts are provided by Asp-7 and Glu-53.

The protein belongs to the P-Pant transferase superfamily. AcpS family. Mg(2+) serves as cofactor.

Its subcellular location is the cytoplasm. It catalyses the reaction apo-[ACP] + CoA = holo-[ACP] + adenosine 3',5'-bisphosphate + H(+). In terms of biological role, transfers the 4'-phosphopantetheine moiety from coenzyme A to a Ser of acyl-carrier-protein. The sequence is that of Holo-[acyl-carrier-protein] synthase from Roseiflexus castenholzii (strain DSM 13941 / HLO8).